The primary structure comprises 383 residues: ATP phosphoribosyltransferase regulatory subunit (383 aa).

It belongs to the class-II aminoacyl-tRNA synthetase family. HisZ subfamily. In terms of assembly, heteromultimer composed of HisG and HisZ subunits.

The protein resides in the cytoplasm. It participates in amino-acid biosynthesis; L-histidine biosynthesis; L-histidine from 5-phospho-alpha-D-ribose 1-diphosphate: step 1/9. Required for the first step of histidine biosynthesis. May allow the feedback regulation of ATP phosphoribosyltransferase activity by histidine. This chain is ATP phosphoribosyltransferase regulatory subunit, found in Cupriavidus necator (strain ATCC 17699 / DSM 428 / KCTC 22496 / NCIMB 10442 / H16 / Stanier 337) (Ralstonia eutropha).